The chain runs to 428 residues: Adenylosuccinate synthetase (428 aa).

Residues 12 to 18 (GDEGKGK) and 40 to 42 (GHS) contribute to the GTP site. Aspartate 13 (proton acceptor) is an active-site residue. Residues aspartate 13 and glycine 40 each coordinate Mg(2+). IMP contacts are provided by residues 13-16 (DEGK), 38-41 (NAGH), threonine 128, arginine 142, glutamine 223, threonine 238, and arginine 302. The active-site Proton donor is the histidine 41. Position 298–304 (298–304 (VTTGRPR)) interacts with substrate. Residues arginine 304, 330 to 332 (KLD), and 412 to 414 (GTG) contribute to the GTP site.

Belongs to the adenylosuccinate synthetase family. As to quaternary structure, homodimer. Mg(2+) is required as a cofactor.

The protein localises to the cytoplasm. The enzyme catalyses IMP + L-aspartate + GTP = N(6)-(1,2-dicarboxyethyl)-AMP + GDP + phosphate + 2 H(+). It functions in the pathway purine metabolism; AMP biosynthesis via de novo pathway; AMP from IMP: step 1/2. Its function is as follows. Plays an important role in the de novo pathway of purine nucleotide biosynthesis. Catalyzes the first committed step in the biosynthesis of AMP from IMP. This chain is Adenylosuccinate synthetase, found in Bifidobacterium longum (strain NCC 2705).